Here is a 259-residue protein sequence, read N- to C-terminus: Thiazole synthase (259 aa).

Residue K95 is the Schiff-base intermediate with DXP of the active site. Residues G156, 182 to 183 (AG), and 204 to 205 (NT) contribute to the 1-deoxy-D-xylulose 5-phosphate site.

The protein belongs to the ThiG family. In terms of assembly, homotetramer. Forms heterodimers with either ThiH or ThiS.

It localises to the cytoplasm. It catalyses the reaction [ThiS sulfur-carrier protein]-C-terminal-Gly-aminoethanethioate + 2-iminoacetate + 1-deoxy-D-xylulose 5-phosphate = [ThiS sulfur-carrier protein]-C-terminal Gly-Gly + 2-[(2R,5Z)-2-carboxy-4-methylthiazol-5(2H)-ylidene]ethyl phosphate + 2 H2O + H(+). It functions in the pathway cofactor biosynthesis; thiamine diphosphate biosynthesis. Catalyzes the rearrangement of 1-deoxy-D-xylulose 5-phosphate (DXP) to produce the thiazole phosphate moiety of thiamine. Sulfur is provided by the thiocarboxylate moiety of the carrier protein ThiS. In vitro, sulfur can be provided by H(2)S. The chain is Thiazole synthase from Proteus mirabilis (strain HI4320).